Reading from the N-terminus, the 216-residue chain is Cytidylate kinase (216 aa).

7 to 15 (GPSGTGKST) is an ATP binding site.

It belongs to the cytidylate kinase family. Type 1 subfamily.

The protein resides in the cytoplasm. It carries out the reaction CMP + ATP = CDP + ADP. The catalysed reaction is dCMP + ATP = dCDP + ADP. This Chlamydia caviae (strain ATCC VR-813 / DSM 19441 / 03DC25 / GPIC) (Chlamydophila caviae) protein is Cytidylate kinase.